The primary structure comprises 314 residues: Homoserine kinase (314 aa).

95–105 provides a ligand contact to ATP; the sequence is PHSRGLGSSAA.

Belongs to the GHMP kinase family. Homoserine kinase subfamily.

It localises to the cytoplasm. The catalysed reaction is L-homoserine + ATP = O-phospho-L-homoserine + ADP + H(+). It functions in the pathway amino-acid biosynthesis; L-threonine biosynthesis; L-threonine from L-aspartate: step 4/5. Catalyzes the ATP-dependent phosphorylation of L-homoserine to L-homoserine phosphate. The polypeptide is Homoserine kinase (Mycobacterium sp. (strain KMS)).